A 49-amino-acid polypeptide reads, in one-letter code: Putative metallothionein MT1DP (49 aa).

Residues methionine 1–cysteine 29 are beta. The a divalent metal cation site is built by cysteine 5, cysteine 7, cysteine 13, cysteine 15, cysteine 19, cysteine 21, cysteine 26, cysteine 29, cysteine 33, cysteine 34, cysteine 36, cysteine 37, cysteine 41, cysteine 44, and cysteine 48. Residues lysine 30 to threonine 49 form an alpha region.

Belongs to the metallothionein superfamily. Type 1 family.

In terms of biological role, metallothioneins have a high content of cysteine residues that bind various heavy metals. In Homo sapiens (Human), this protein is Putative metallothionein MT1DP (MT1DP).